A 249-amino-acid polypeptide reads, in one-letter code: Segregation and condensation protein A (249 aa).

The protein belongs to the ScpA family. As to quaternary structure, component of a cohesin-like complex composed of ScpA, ScpB and the Smc homodimer, in which ScpA and ScpB bind to the head domain of Smc. The presence of the three proteins is required for the association of the complex with DNA.

It localises to the cytoplasm. Functionally, participates in chromosomal partition during cell division. May act via the formation of a condensin-like complex containing Smc and ScpB that pull DNA away from mid-cell into both cell halves. This chain is Segregation and condensation protein A, found in Listeria monocytogenes serotype 4b (strain CLIP80459).